The following is a 338-amino-acid chain: Phenylalanine--tRNA ligase alpha subunit (338 aa).

Residue Glu252 participates in Mg(2+) binding.

It belongs to the class-II aminoacyl-tRNA synthetase family. Phe-tRNA synthetase alpha subunit type 1 subfamily. In terms of assembly, tetramer of two alpha and two beta subunits. The cofactor is Mg(2+).

Its subcellular location is the cytoplasm. The catalysed reaction is tRNA(Phe) + L-phenylalanine + ATP = L-phenylalanyl-tRNA(Phe) + AMP + diphosphate + H(+). The sequence is that of Phenylalanine--tRNA ligase alpha subunit from Fusobacterium nucleatum subsp. nucleatum (strain ATCC 25586 / DSM 15643 / BCRC 10681 / CIP 101130 / JCM 8532 / KCTC 2640 / LMG 13131 / VPI 4355).